Here is a 92-residue protein sequence, read N- to C-terminus: MTTIRCVLFAVLLFAYCALLIKARSIDAEAEKTWQEEETKTVAEKSPLKKRGCSDAFPVVCRSPSVKAACYNPNHRSHAFITDVCKHTCHLC.

A signal peptide spans 1-23; the sequence is MTTIRCVLFAVLLFAYCALLIKA. Positions 24–51 are excised as a propeptide; it reads RSIDAEAEKTWQEEETKTVAEKSPLKKR. 3 disulfides stabilise this stretch: C53–C92, C61–C85, and C70–C89.

As to expression, transcripts are first expressed mostly in the endoderm (with rare ectodermal cells) in the late planulae. They are mostly expressed in endodermal ganglion cells in the body column and tentacles in primary polyps, as well as in a small number of ectodermal sensory neurons in tentacles and body wall. They are not expressed in nematocytes. Transcripts are predominantly expressed in ectodermal sensory neurons in early and late planulae. They are expressed in endodermal ganglion cells in the body column and tentacles in primary polyps, as well as in a small number of ectodermal neurons in pharynx. They are not expressed in nematocytes.

In vivo, this neuropeptide induces contraction paralysis followed by death (within 2 hours) on 4 zebrafish larvae on the 15 tested. Also induces body contraction in Nematostella 11-dpf polyps. This Nematostella vectensis (Starlet sea anemone) protein is Neuropeptide ShK-like2.